The primary structure comprises 509 residues: Putative cytochrome P450 CYP13A8 (509 aa).

Position 455 (cysteine 455) interacts with heme.

It belongs to the cytochrome P450 family. Requires heme as cofactor.

Its function is as follows. Cytochromes P450 are a group of heme-thiolate monooxygenases. They oxidize a variety of structurally unrelated compounds, including steroids, fatty acids, and xenobiotics. In Caenorhabditis elegans, this protein is Putative cytochrome P450 CYP13A8 (cyp-13A8).